The chain runs to 645 residues: DNA mismatch repair protein MutL (645 aa).

Disordered regions lie at residues 353 to 381 (RPEN…FGPQ) and 395 to 420 (QGEP…PTTG).

The protein belongs to the DNA mismatch repair MutL/HexB family.

This protein is involved in the repair of mismatches in DNA. It is required for dam-dependent methyl-directed DNA mismatch repair. May act as a 'molecular matchmaker', a protein that promotes the formation of a stable complex between two or more DNA-binding proteins in an ATP-dependent manner without itself being part of a final effector complex. This Pseudomonas syringae pv. tomato (strain ATCC BAA-871 / DC3000) protein is DNA mismatch repair protein MutL.